We begin with the raw amino-acid sequence, 294 residues long: 4-hydroxy-tetrahydrodipicolinate synthase (294 aa).

A pyruvate-binding site is contributed by Thr-45. The Proton donor/acceptor role is filled by Tyr-133. Catalysis depends on Lys-161, which acts as the Schiff-base intermediate with substrate. Ile-203 is a binding site for pyruvate.

The protein belongs to the DapA family. As to quaternary structure, homotetramer; dimer of dimers.

It is found in the cytoplasm. The enzyme catalyses L-aspartate 4-semialdehyde + pyruvate = (2S,4S)-4-hydroxy-2,3,4,5-tetrahydrodipicolinate + H2O + H(+). It participates in amino-acid biosynthesis; L-lysine biosynthesis via DAP pathway; (S)-tetrahydrodipicolinate from L-aspartate: step 3/4. Catalyzes the condensation of (S)-aspartate-beta-semialdehyde [(S)-ASA] and pyruvate to 4-hydroxy-tetrahydrodipicolinate (HTPA). This Thioalkalivibrio sulfidiphilus (strain HL-EbGR7) protein is 4-hydroxy-tetrahydrodipicolinate synthase.